Consider the following 466-residue polypeptide: Pentatricopeptide repeat-containing protein At4g01400, mitochondrial (466 aa).

The transit peptide at 1-34 directs the protein to the mitochondrion; that stretch reads MIRRPIYDFAAVFRHLTSPLSTSSRFLFYSSSEH. 8 PPR repeats span residues 118–152, 153–188, 189–223, 224–258, 259–293, 294–328, 329–363, and 364–398; these read TGEI…NFTP, QPKH…GVMP, NTRS…DVVP, DVDS…GFVP, DRLS…GCNP, DLVH…GCSP, NSVS…GFSP, and HFSV…GETL.

This sequence belongs to the PPR family. P subfamily.

It is found in the mitochondrion. In Arabidopsis thaliana (Mouse-ear cress), this protein is Pentatricopeptide repeat-containing protein At4g01400, mitochondrial.